An 864-amino-acid chain; its full sequence is Leucine--tRNA ligase (864 aa).

The short motif at 42–52 (PYPSGKLHMGH) is the 'HIGH' region element. The short motif at 624-628 (KMSKS) is the 'KMSKS' region element. An ATP-binding site is contributed by Lys-627.

Belongs to the class-I aminoacyl-tRNA synthetase family.

It is found in the cytoplasm. It carries out the reaction tRNA(Leu) + L-leucine + ATP = L-leucyl-tRNA(Leu) + AMP + diphosphate. This chain is Leucine--tRNA ligase, found in Burkholderia cenocepacia (strain ATCC BAA-245 / DSM 16553 / LMG 16656 / NCTC 13227 / J2315 / CF5610) (Burkholderia cepacia (strain J2315)).